The sequence spans 289 residues: Ribosomal protein L11 methyltransferase (289 aa).

The S-adenosyl-L-methionine site is built by Thr-142, Gly-163, Asp-185, and Asn-226.

Belongs to the methyltransferase superfamily. PrmA family.

Its subcellular location is the cytoplasm. It catalyses the reaction L-lysyl-[protein] + 3 S-adenosyl-L-methionine = N(6),N(6),N(6)-trimethyl-L-lysyl-[protein] + 3 S-adenosyl-L-homocysteine + 3 H(+). Methylates ribosomal protein L11. This chain is Ribosomal protein L11 methyltransferase, found in Legionella pneumophila (strain Paris).